The primary structure comprises 123 residues: MPTINQLVRNGRKRATKKTTTPALKGAPQKRGVCVRVYTTTPKKPNSALRKVARVRLTTGIEVTAYIPGIGHNLQEHSVVLVRGGRVKDLPGVRYHIVRGTLDTLGVSDRKQGRSKYGTKRPK.

The segment at 9–28 (RNGRKRATKKTTTPALKGAP) is disordered. Low complexity predominate over residues 18 to 27 (KTTTPALKGA). Asp89 carries the 3-methylthioaspartic acid modification.

It belongs to the universal ribosomal protein uS12 family. As to quaternary structure, part of the 30S ribosomal subunit. Contacts proteins S8 and S17. May interact with IF1 in the 30S initiation complex.

Its function is as follows. With S4 and S5 plays an important role in translational accuracy. In terms of biological role, interacts with and stabilizes bases of the 16S rRNA that are involved in tRNA selection in the A site and with the mRNA backbone. Located at the interface of the 30S and 50S subunits, it traverses the body of the 30S subunit contacting proteins on the other side and probably holding the rRNA structure together. The combined cluster of proteins S8, S12 and S17 appears to hold together the shoulder and platform of the 30S subunit. This chain is Small ribosomal subunit protein uS12, found in Desulfosudis oleivorans (strain DSM 6200 / JCM 39069 / Hxd3) (Desulfococcus oleovorans).